We begin with the raw amino-acid sequence, 512 residues long: Retinaldehyde dehydrogenase 3 (512 aa).

The segment at 1 to 22 (MATANGAVENGQPDRKPPALPR) is disordered. Position 2 is an N-acetylalanine (alanine 2). NAD(+)-binding positions include lysine 204, glutamate 207, and 257-262 (GSTEVG). Glutamate 280 acts as the Proton acceptor in catalysis. Cysteine 314 functions as the Nucleophile in the catalytic mechanism. NAD(+) is bound by residues glutamine 361 and glutamate 411.

It belongs to the aldehyde dehydrogenase family. As to quaternary structure, homotetramer. Expressed at low levels in many tissues and at higher levels in salivary gland, stomach, and kidney.

It is found in the cytoplasm. The enzyme catalyses all-trans-retinal + NAD(+) + H2O = all-trans-retinoate + NADH + 2 H(+). It carries out the reaction retinal + NAD(+) + H2O = retinoate + NADH + 2 H(+). It catalyses the reaction all-trans-13,14-dihydroretinal + NAD(+) + H2O = all-trans-13,14-dihydroretinoate + NADH + 2 H(+). Its pathway is cofactor metabolism; retinol metabolism. Catalyzes the NAD-dependent oxidation of aldehyde substrates, such as all-trans-retinal and all-trans-13,14-dihydroretinal, to their corresponding carboxylic acids, all-trans-retinoate and all-trans-13,14-dihydroretinoate, respectively. High specificity for all-trans-retinal as substrate, can also accept acetaldehyde as substrate in vitro but with lower affinity. Required for the biosynthesis of normal levels of retinoate in the embryonic ocular and nasal regions; a critical lipid in the embryonic development of the eye and the nasal region. This chain is Retinaldehyde dehydrogenase 3 (ALDH1A3), found in Homo sapiens (Human).